The sequence spans 103 residues: Histone H4 (103 aa).

Positions 1-14 are enriched in gly residues; it reads MSGRGKGGKGLGKG. A disordered region spans residues 1-20; sequence MSGRGKGGKGLGKGGAKRHR. Lysine 6 is subject to N6-acetyl-N6-methyllysine; alternate. N6-methyllysine; alternate occurs at positions 6, 9, and 13. Lysine 13 carries the N6-acetyl-N6-methyllysine; alternate modification. Residues 17-21 mediate DNA binding; it reads KRHRK. Position 92 is an N6-glutaryllysine (lysine 92).

It belongs to the histone H4 family. As to quaternary structure, the nucleosome is a histone octamer containing two molecules each of H2A, H2B, H3 and H4 assembled in one H3-H4 heterotetramer and two H2A-H2B heterodimers. The octamer wraps approximately 147 bp of DNA. In terms of processing, glutarylation at Lys-92 (H4K91glu) destabilizes nucleosomes by promoting dissociation of the H2A-H2B dimers from nucleosomes.

The protein localises to the nucleus. The protein resides in the chromosome. Core component of nucleosome. Nucleosomes wrap and compact DNA into chromatin, limiting DNA accessibility to the cellular machineries which require DNA as a template. Histones thereby play a central role in transcription regulation, DNA repair, DNA replication and chromosomal stability. DNA accessibility is regulated via a complex set of post-translational modifications of histones, also called histone code, and nucleosome remodeling. This is Histone H4 (H4.1) from Phanerodontia chrysosporium (White-rot fungus).